A 192-amino-acid chain; its full sequence is Probable molybdenum cofactor guanylyltransferase (192 aa).

Residues 8–10 (LAG), Lys-20, Asp-69, and Asp-94 contribute to the GTP site. Asp-94 is a Mg(2+) binding site.

The protein belongs to the MobA family. Requires Mg(2+) as cofactor.

It is found in the cytoplasm. The enzyme catalyses Mo-molybdopterin + GTP + H(+) = Mo-molybdopterin guanine dinucleotide + diphosphate. Functionally, transfers a GMP moiety from GTP to Mo-molybdopterin (Mo-MPT) cofactor (Moco or molybdenum cofactor) to form Mo-molybdopterin guanine dinucleotide (Mo-MGD) cofactor. The chain is Probable molybdenum cofactor guanylyltransferase from Pyrococcus horikoshii (strain ATCC 700860 / DSM 12428 / JCM 9974 / NBRC 100139 / OT-3).